A 1710-amino-acid polypeptide reads, in one-letter code: Latrophilin Cirl (1710 aa).

Topologically, residues 1-767 (MLPTILSISY…LFTMFDGNMR (767 aa)) are extracellular. Residues 25 to 114 (ACEGKKLTIE…KYLEAHYQCI (90 aa)) enclose the SUEL-type lectin domain. N-linked (GlcNAc...) asparagine glycosylation occurs at asparagine 142. The tract at residues 183-304 (QHTAVTHSTP…SGSVVPGNGS (122 aa)) is disordered. Composition is skewed to polar residues over residues 185 to 198 (TAVT…STTA) and 256 to 265 (NATSPSNTRI). Asparagine 256 carries an N-linked (GlcNAc...) asparagine glycan. 2 stretches are compositionally biased toward low complexity: residues 275–285 (DDGTLLTTKSS) and 295–304 (SGSVVPGNGS). N-linked (GlcNAc...) asparagine glycosylation is found at asparagine 302 and asparagine 341. The segment at 376–400 (YDEYDDDPSSTTPATSSADCLHNSS) is disordered. Over residues 384 to 394 (SSTTPATSSAD) the composition is skewed to low complexity. Asparagine 398, asparagine 655, asparagine 703, and asparagine 730 each carry an N-linked (GlcNAc...) asparagine glycan. Positions 561–754 (RSVVQKVKNI…AILMDVVDEH (194 aa)) constitute a GAIN-B domain. 2 cysteine pairs are disulfide-bonded: cysteine 709–cysteine 736 and cysteine 724–cysteine 738. A GPS region spans residues 709–754 (CVFWNYIDHAWSANGCSLESTNRTHSVCSCNHLTNFAILMDVVDEH). Residues 768-788 (IFIYISIGICVVFIVIALLTL) traverse the membrane as a helical segment. Residues 789–801 (KLFNGVFVKSART) are Cytoplasmic-facing. The helical transmembrane segment at 802 to 822 (SIYTSIYLCLLAIELLFLLGI) threads the bilayer. Topologically, residues 823–828 (EQTETS) are extracellular. A helical membrane pass occupies residues 829–849 (IFCGFITIFLHCAILSGTAWF). Residues 850-875 (CYEAFHSYSTLTSDELLLEVDQTPKV) are Cytoplasmic-facing. A helical membrane pass occupies residues 876–896 (NCYYLLSYGLSLSVVAISLVI). The Extracellular portion of the chain corresponds to 897–920 (DPSTYTQNDYCVLMEANALFYATF). A helical membrane pass occupies residues 921 to 941 (VMPVLVFFVAAIGYTFLSWII). Residues 942 to 968 (MCRKSRTGLKTKEHTRLASVRFDIRCS) are Cytoplasmic-facing. The helical transmembrane segment at 969–989 (FVFLLLLSAVWCSAYFYLRGA) threads the bilayer. Residues 990 to 999 (KMDDDTADVY) are Extracellular-facing. Residues 1000–1020 (GYCFICFNTLLGLYIFVFHCI) traverse the membrane as a helical segment. Residues 1021 to 1710 (QNEKIRREYR…VRCYLEPLAK (690 aa)) are Cytoplasmic-facing. Phosphoserine is present on residues serine 1156, serine 1253, serine 1260, serine 1329, and serine 1330. A disordered region spans residues 1234–1259 (KPNSGQHGKKKRGAGGVPASPSGSLH). Disordered regions lie at residues 1452–1540 (GGGS…SDER) and 1568–1690 (DYGA…QQRH). A compositionally biased stretch (low complexity) spans 1458 to 1483 (GGSVSSRSQQQQLKKQQQQQSLAQQR). Composition is skewed to acidic residues over residues 1491–1505 (DDDD…EEAT) and 1515–1528 (CDED…DLED). The segment covering 1638-1650 (QTPAQKRQQLQKL) has biased composition (polar residues). A compositionally biased stretch (low complexity) spans 1651–1672 (SPQSTTSSSSHTSHSNPNPHPH). Residues 1673-1689 (QLTHPHPHQHPPHHQQR) are compositionally biased toward basic residues.

This sequence belongs to the G-protein coupled receptor 2 family. LN-TM7 subfamily. As to quaternary structure, forms a heterodimer, consisting of a large extracellular region non-covalently linked to a seven-transmembrane moiety. Proteolytically cleaved into 2 subunits, an extracellular subunit and a seven-transmembrane subunit.

It is found in the cell membrane. In Drosophila erecta (Fruit fly), this protein is Latrophilin Cirl.